Consider the following 250-residue polypeptide: Hydroxyethylthiazole kinase (250 aa).

M39 provides a ligand contact to substrate. Positions 114 and 159 each coordinate ATP. Substrate is bound at residue G186.

The protein belongs to the Thz kinase family. The cofactor is Mg(2+).

The enzyme catalyses 5-(2-hydroxyethyl)-4-methylthiazole + ATP = 4-methyl-5-(2-phosphooxyethyl)-thiazole + ADP + H(+). It participates in cofactor biosynthesis; thiamine diphosphate biosynthesis; 4-methyl-5-(2-phosphoethyl)-thiazole from 5-(2-hydroxyethyl)-4-methylthiazole: step 1/1. Catalyzes the phosphorylation of the hydroxyl group of 4-methyl-5-beta-hydroxyethylthiazole (THZ). The chain is Hydroxyethylthiazole kinase from Lactococcus lactis subsp. lactis (strain IL1403) (Streptococcus lactis).